A 119-amino-acid chain; its full sequence is Hydrogenase maturation factor HypA (119 aa).

Residue His2 participates in Ni(2+) binding. Zn(2+) contacts are provided by Cys73, Cys76, Cys89, and Cys92.

Belongs to the HypA/HybF family.

In terms of biological role, involved in the maturation of [NiFe] hydrogenases. Required for nickel insertion into the metal center of the hydrogenase. The sequence is that of Hydrogenase maturation factor HypA from Dehalococcoides mccartyi (strain CBDB1).